The primary structure comprises 921 residues: Retinoblastoma-associated protein (921 aa).

Residues 1–36 are disordered; it reads MPPKAPRRAAAAEPPPPPPPPPREDDPAQDSGPEEL. Pro2 carries the post-translational modification N,N-dimethylproline; by NTM1. Phosphoserine is present on residues Ser31 and Ser243. A phosphothreonine mark is found at Thr246, Thr350, Thr364, and Thr367. A disordered region spans residues 341–360; that stretch reads PIDSFETERTPRKNNPDEEA. The span at 346–356 shows a compositional bias: basic and acidic residues; the sequence is ETERTPRKNNP. Residues 367–573 are domain A; the sequence is TPVRTVMNTI…FDLIKQSKDG (207 aa). Residues 367-764 form a pocket; binds T and E1A region; sequence TPVRTVMNTI…QRLKTNILQY (398 aa). Ser561 carries the post-translational modification Phosphoserine; by CDK2. Residues 574-632 are spacer; sequence EGPDNLEPACPLSLPLQGNHTAADMYLSPLRSPKKRTSTTRVNSAANTETQAASAFHTQ. Residues Ser601, Ser605, and Ser617 each carry the phosphoserine modification. Residues 633-764 are domain B; that stretch reads KPLKSTSLAL…QRLKTNILQY (132 aa). An interaction with LIMD1 region spans residues 756-921; the sequence is RLKTNILQYA…SKDVSNKEEK (166 aa). The domain; mediates interaction with E4F1 stretch occupies residues 764–921; that stretch reads YASTRPPTLS…SKDVSNKEEK (158 aa). 4 positions are modified to phosphoserine: Ser773, Ser781, Ser788, and Ser800. Lys803 is subject to N6-methyllysine; by SMYD2. Position 804 is a phosphoserine (Ser804). Phosphothreonine occurs at positions 814, 816, 819, and 834. Residue Ser848 is modified to Phosphoserine. Residue Lys853 is modified to N6-methyllysine; by SMYD2. Positions 853–869 match the Bipartite nuclear localization signal motif; it reads KRSAEGGNPPKPLKKLR. Lys866 and Lys867 each carry N6-acetyllysine; by PCAF. The disordered stretch occupies residues 872–921; the sequence is IEGADEADGSKHLPAESKFQQKLAEMTSTRTRMQKQRMNESKDVSNKEEK. The span at 908–921 shows a compositional bias: basic and acidic residues; that stretch reads RMNESKDVSNKEEK.

Belongs to the retinoblastoma protein (RB) family. In terms of assembly, the hypophosphorylated form interacts with and sequesters the E2F1 transcription factor, thereby inhibiting E2F1 transcription. Interacts with heterodimeric E2F/DP transcription factor complexes containing TFDP1 and either E2F1/E2F, E2F3, E2F4 or E2F5, or TFDP2 and E2F4. Interacts (when hyperphosphorylated and hypophosphorylated) with PKP3; the interaction inhibits RB1 interaction with and repression of the transcription factor E2F1, potentially via sequestering RB1 to the cytoplasm. The unphosphorylated form interacts with EID1, ARID3B, KDM5A, SUV39H1, MJD2A/JHDM3A and THOC1. Interacts with the N-terminal domain of TAF1. Interacts with SNW1, ATAD5, AATF, DNMT1, LIN9, LMNA, KMT5B, KMT5C, PELP1, UHRF2, TMPO-alpha and USP4. Interacts with GRIP1 and UBR4. Interacts with ARID4A and KDM5B. Interacts with E4F1 and LIMD1. Interacts with SMARCA4/BRG1 and HDAC1. Interacts with USP4. Interacts (when methylated at Lys-853) with L3MBTL1. Binds to CDK1 and CDK2. Interacts with CHEK2; phosphorylates RB1. Interacts with PRMT2. Interacts with CEBPA. P-TEFB complex interacts with RB1; promotes phosphorylation of RB1. Interacts with RBBP9; the interaction disrupts RB1 binding to E2F1. Interacts with KAT2B/PCAF and EP300/P300. Interacts with PAX5. Interacts (phosphorylated and unphosphorylated) with BLCAP. May interact with NDC80. (Microbial infection) Interacts with adenovirus E1a protein. As to quaternary structure, (Microbial infection) Interacts with SV40 large T antigen. In terms of processing, phosphorylated. Phosphorylated by CDK6 and CDK4, and subsequently by CDK2 at Ser-561 in G1, thereby releasing E2F1 which is then able to activate cell growth. Dephosphorylated at the late M phase. Phosphorylation of threonine residues in domain C promotes interaction between the C-terminal domain C and the Pocket domain, and thereby inhibits interactions with heterodimeric E2F/DP transcription factor complexes. Dephosphorylated at Ser-788 by calcineruin upon calcium stimulation. CDK3/cyclin-C-mediated phosphorylation at Ser-800 and Ser-804 is required for G0-G1 transition. Phosphorylated by CDK1 and CDK2 upon TGFB1-mediated apoptosis. Post-translationally, monomethylation at Lys-803 by SMYD2 enhances phosphorylation at Ser-800 and Ser-804, and promotes cell cycle progression. Monomethylation at Lys-853 by SMYD2 promotes interaction with L3MBTL1. N-terminus is methylated by METTL11A/NTM1. Acetylated in the skin. Acetylation at Lys-866 and Lys-867 regulates subcellular localization during keratinocytes differentiation. As to expression, expressed in the cell nuclei of renal tubules, hepatocytes and skeletal muscles. Expressed in skin (at protein level).

It is found in the nucleus. Its subcellular location is the cytoplasm. Its function is as follows. Tumor suppressor that is a key regulator of the G1/S transition of the cell cycle. The hypophosphorylated form binds transcription regulators of the E2F family, preventing transcription of E2F-responsive genes. Both physically blocks E2Fs transactivating domain and recruits chromatin-modifying enzymes that actively repress transcription. Cyclin and CDK-dependent phosphorylation of RB1 induces its dissociation from E2Fs, thereby activating transcription of E2F responsive genes and triggering entry into S phase. RB1 also promotes the G0-G1 transition upon phosphorylation and activation by CDK3/cyclin-C. Directly involved in heterochromatin formation by maintaining overall chromatin structure and, in particular, that of constitutive heterochromatin by stabilizing histone methylation. Recruits and targets histone methyltransferases SUV39H1, KMT5B and KMT5C, leading to epigenetic transcriptional repression. Controls histone H4 'Lys-20' trimethylation. Inhibits the intrinsic kinase activity of TAF1. Mediates transcriptional repression by SMARCA4/BRG1 by recruiting a histone deacetylase (HDAC) complex to the c-FOS promoter. In resting neurons, transcription of the c-FOS promoter is inhibited by BRG1-dependent recruitment of a phospho-RB1-HDAC1 repressor complex. Upon calcium influx, RB1 is dephosphorylated by calcineurin, which leads to release of the repressor complex. The polypeptide is Retinoblastoma-associated protein (Rb1) (Mus musculus (Mouse)).